Here is a 364-residue protein sequence, read N- to C-terminus: Phospho-N-acetylmuramoyl-pentapeptide-transferase (364 aa).

The next 10 helical transmembrane spans lie at 18–38, 48–68, 91–111, 114–134, 154–174, 183–203, 214–234, 237–257, 280–300, and 343–363; these read SLLI…AQIL, LFPL…VVPV, GTPT…ALIW, LDPA…IGWI, LILQ…TQSA, GQII…VLVA, VDGL…ALMA, NPGL…FIVH, AIGI…IFFV, and TQIV…AVIS.

It belongs to the glycosyltransferase 4 family. MraY subfamily. It depends on Mg(2+) as a cofactor.

It localises to the cell inner membrane. It carries out the reaction UDP-N-acetyl-alpha-D-muramoyl-L-alanyl-gamma-D-glutamyl-meso-2,6-diaminopimeloyl-D-alanyl-D-alanine + di-trans,octa-cis-undecaprenyl phosphate = di-trans,octa-cis-undecaprenyl diphospho-N-acetyl-alpha-D-muramoyl-L-alanyl-D-glutamyl-meso-2,6-diaminopimeloyl-D-alanyl-D-alanine + UMP. It functions in the pathway cell wall biogenesis; peptidoglycan biosynthesis. Its function is as follows. Catalyzes the initial step of the lipid cycle reactions in the biosynthesis of the cell wall peptidoglycan: transfers peptidoglycan precursor phospho-MurNAc-pentapeptide from UDP-MurNAc-pentapeptide onto the lipid carrier undecaprenyl phosphate, yielding undecaprenyl-pyrophosphoryl-MurNAc-pentapeptide, known as lipid I. The protein is Phospho-N-acetylmuramoyl-pentapeptide-transferase of Rippkaea orientalis (strain PCC 8801 / RF-1) (Cyanothece sp. (strain PCC 8801)).